The following is a 447-amino-acid chain: N-succinylarginine dihydrolase (447 aa).

Residues 19 to 28 (AGLSFGNEAS), N110, and 137 to 138 (HR) each bind substrate. Residue E174 is part of the active site. R212 is a substrate binding site. H248 is an active-site residue. Residues D250 and N359 each coordinate substrate. C365 acts as the Nucleophile in catalysis.

It belongs to the succinylarginine dihydrolase family. Homodimer.

The enzyme catalyses N(2)-succinyl-L-arginine + 2 H2O + 2 H(+) = N(2)-succinyl-L-ornithine + 2 NH4(+) + CO2. It participates in amino-acid degradation; L-arginine degradation via AST pathway; L-glutamate and succinate from L-arginine: step 2/5. Catalyzes the hydrolysis of N(2)-succinylarginine into N(2)-succinylornithine, ammonia and CO(2). This chain is N-succinylarginine dihydrolase, found in Escherichia coli O6:K15:H31 (strain 536 / UPEC).